The sequence spans 427 residues: Glutamate-1-semialdehyde 2,1-aminomutase (427 aa).

Lysine 265 bears the N6-(pyridoxal phosphate)lysine mark.

It belongs to the class-III pyridoxal-phosphate-dependent aminotransferase family. HemL subfamily. As to quaternary structure, homodimer. Pyridoxal 5'-phosphate serves as cofactor.

It localises to the cytoplasm. It carries out the reaction (S)-4-amino-5-oxopentanoate = 5-aminolevulinate. It participates in porphyrin-containing compound metabolism; protoporphyrin-IX biosynthesis; 5-aminolevulinate from L-glutamyl-tRNA(Glu): step 2/2. This chain is Glutamate-1-semialdehyde 2,1-aminomutase, found in Paraburkholderia phytofirmans (strain DSM 17436 / LMG 22146 / PsJN) (Burkholderia phytofirmans).